The sequence spans 274 residues: DNA damage-inducible protein D (274 aa).

This Escherichia coli (strain K12) protein is DNA damage-inducible protein D (dinD).